A 521-amino-acid polypeptide reads, in one-letter code: Lysine--tRNA ligase (521 aa).

The short motif at 32 to 40 is the 'HIGH' region element; sequence PSGTVHIGN. The 'KMSKS' region signature appears at 280-284; sequence KISSS.

The protein belongs to the class-I aminoacyl-tRNA synthetase family.

The protein resides in the cytoplasm. It catalyses the reaction tRNA(Lys) + L-lysine + ATP = L-lysyl-tRNA(Lys) + AMP + diphosphate. This Borreliella burgdorferi (strain ATCC 35210 / DSM 4680 / CIP 102532 / B31) (Borrelia burgdorferi) protein is Lysine--tRNA ligase (lysS).